The primary structure comprises 537 residues: Intercellular adhesion molecule 1 (537 aa).

An N-terminal signal peptide occupies residues 1–27; the sequence is MASTRAKPTLPLLLALVTVVIPGPGDA. The Extracellular portion of the chain corresponds to 28–485; that stretch reads QVSIHPREAF…LTVLYHSQNN (458 aa). Ig-like C2-type domains lie at 41 to 102 and 127 to 195; these read GGSV…QSSA and GKDL…LDLR. A glycan (N-linked (GlcNAc...) asparagine) is linked at Asn47. Disulfide bonds link Cys48-Cys91, Cys52-Cys95, and Cys134-Cys188. The Cell attachment site; atypical signature appears at 151–153; sequence RGE. The Cell attachment site motif lies at 179-181; the sequence is RGD. 9 N-linked (GlcNAc...) asparagine glycosylation sites follow: Asn185, Asn204, Asn267, Asn311, Asn362, Asn388, Asn409, Asn456, and Asn469. The Ig-like C2-type 3 domain maps to 232-299; that stretch reads GTQQKLFCSL…LRCVLELADQ (68 aa). Cys239 and Cys292 are oxidised to a cystine. The region spanning 327-381 is the Ig-like C2-type 4 domain; the sequence is GSQVTVKCEAHSGSKVVLLSGVEPRPPTPQVQFTLNASSEDHKRSFFCSAALEVA. A disulfide bridge links Cys334 with Cys374. 3 disulfides stabilise this stretch: Cys406-Cys422, Cys422-Cys461, and Cys434-Cys461. The Ig-like C2-type 5 domain occupies 415-468; that stretch reads GSQQTLKCQAWGNPSPKMTCRRKADGALLPIGVVKSVKQEMNGTYVCHAFSSHG. A helical membrane pass occupies residues 486 to 509; it reads WTIIILVPVLLVIVGLVMAASYVY. Topologically, residues 510 to 537 are cytoplasmic; sequence NRQRKIRIYKLQKAQEEAIKLKGQAPPP.

The protein belongs to the immunoglobulin superfamily. ICAM family. In terms of assembly, homodimer. Interacts with MUC1 and promotes cell aggregation in epithelial cells. Interacts with ARHGEF26/SGEF. Interacts (on T cell side) with CD81, CD247 and CD9 at immunological synapses between antigen-presenting cells and T cells. In terms of processing, monoubiquitinated, which is promoted by MARCH9 and leads to endocytosis. In terms of tissue distribution, expressed at low level on a subpopulation of lymphocytes, macrophages, and endothelial cells, but is strongly induced on these cells, and on fibroblasts and epithelial cells.

It localises to the membrane. Functionally, ICAM proteins are ligands for the leukocyte adhesion protein LFA-1 (integrin alpha-L/beta-2). During leukocyte trans-endothelial migration, ICAM1 engagement promotes the assembly of endothelial apical cups through ARHGEF26/SGEF and RHOG activation. In Mus musculus (Mouse), this protein is Intercellular adhesion molecule 1 (Icam1).